We begin with the raw amino-acid sequence, 429 residues long: CinA-like protein (429 aa).

This sequence belongs to the CinA family.

The sequence is that of CinA-like protein from Prochlorococcus marinus (strain MIT 9313).